A 188-amino-acid chain; its full sequence is Putative CC-type chemokine FPV060 (188 aa).

It belongs to the intercrine beta (chemokine CC) family. Highly divergent.

This chain is Putative CC-type chemokine FPV060, found in Fowlpox virus (strain NVSL) (FPV).